A 580-amino-acid chain; its full sequence is Alpha-thujene synthase TPS3, chloroplastic (580 aa).

Residues 1 to 26 (MALQLLTPSFSFQHSPSPHRLTTLRY) constitute a chloroplast transit peptide. (2E)-geranyl diphosphate-binding residues include Arg296, Asp333, Asp337, Arg473, and Asp476. The Mg(2+) site is built by Asp333 and Asp337. The DDXXD motif signature appears at 333-337 (DDVYD). Residues Asp476, Thr480, and Glu484 each coordinate Mg(2+).

It belongs to the terpene synthase family. Tpsb subfamily. As to quaternary structure, monomer. Mg(2+) is required as a cofactor. Requires Mn(2+) as cofactor. Mostly expressed in developing and mature fruits, and, to a lower extent, in male leaves. Barely detectable in female leaves and shoots.

The protein resides in the plastid. It is found in the chloroplast. The enzyme catalyses (2E)-geranyl diphosphate = alpha-thujene + diphosphate. It carries out the reaction (2E)-geranyl diphosphate = (1R,5R)-sabinene + diphosphate. It participates in secondary metabolite biosynthesis; terpenoid biosynthesis. Monoterpene synthase (TPS) involved in the biosynthesis of monoterpene natural products used by traditional Chinese medicine to treat headache, inflammation and intoxication. Catalyzes the conversion of (2E)-geranyl diphosphate (GPP) into alpha-thujene and (1R,5R)-sabinene. The polypeptide is Alpha-thujene synthase TPS3, chloroplastic (Litsea cubeba (Aromatic litsea)).